A 433-amino-acid polypeptide reads, in one-letter code: DNA methyltransferase 1-associated protein 1 (433 aa).

The segment at 1-204 (MSADVRDILD…EVVALLAKAK (204 aa)) is required for nuclear localization. The region spanning 148–197 (NNWSKVQTDHLFDLARRFDLRFIVMADRWNRQQHGTKTVEELKERYYEVV) is the Myb-like domain. Residues 186–281 (VEELKERYYE…ADQQNEHASN (96 aa)) are a coiled coil. Residues 252-264 (EARKKERERKTQD) show a composition bias toward basic and acidic residues. The interval 252-305 (EARKKERERKTQDLQKLISQADQQNEHASNTPSTRKYEKKLHKKKVHQQPRPSR) is disordered. Residues 268-285 (LISQADQQNEHASNTPST) show a composition bias toward polar residues. The span at 288-299 (YEKKLHKKKVHQ) shows a compositional bias: basic residues.

As to quaternary structure, interacts with Rel. Interacts with akirin and Bap55.

It is found in the nucleus. It localises to the cytoplasm. In terms of biological role, involved in transcription repression and activation. Required for larvae and pupal development, and for normal innate immune responses. Involved in modulating the activation of the immune deficiency pathway (Imd), acting either downstream of, or at the level of, the NF-kappa-B factor Rel. Possibly functions with akirin to regulate Rel, and its interaction with the Brahma complex protein Bap55 suggests that it may regulate the IMD pathway at the level of chromatin remodeling. This is DNA methyltransferase 1-associated protein 1 from Drosophila melanogaster (Fruit fly).